The following is a 429-amino-acid chain: Adenylosuccinate synthetase (429 aa).

GTP contacts are provided by residues 12 to 18 and 40 to 42; these read GDEGKGK and GHT. Asp13 functions as the Proton acceptor in the catalytic mechanism. Asp13 and Gly40 together coordinate Mg(2+). IMP contacts are provided by residues 13 to 16, 38 to 41, Thr129, Arg143, Gln223, Thr238, and Arg302; these read DEGK and NAGH. His41 functions as the Proton donor in the catalytic mechanism. 298–304 is a substrate binding site; sequence TVTGRAR. GTP is bound by residues Arg304, 330–332, and 412–414; these read KLD and STS.

It belongs to the adenylosuccinate synthetase family. As to quaternary structure, homodimer. It depends on Mg(2+) as a cofactor.

It is found in the cytoplasm. It carries out the reaction IMP + L-aspartate + GTP = N(6)-(1,2-dicarboxyethyl)-AMP + GDP + phosphate + 2 H(+). The protein operates within purine metabolism; AMP biosynthesis via de novo pathway; AMP from IMP: step 1/2. Plays an important role in the de novo pathway of purine nucleotide biosynthesis. Catalyzes the first committed step in the biosynthesis of AMP from IMP. This Acidiphilium cryptum (strain JF-5) protein is Adenylosuccinate synthetase.